Here is a 701-residue protein sequence, read N- to C-terminus: Potassium-transporting ATPase ATP-binding subunit (701 aa).

The tract at residues 1-28 (MNPDAPTPKNKSSRSRPSDRPQARKKAK) is disordered. 4 helical membrane passes run 57 to 77 (MFLV…PNLF), 90 to 110 (GILT…EAVA), 245 to 265 (VLLA…PVFA), and 276 to 296 (ILVA…LSAI). The active-site 4-aspartylphosphate intermediate is the D329. ATP is bound by residues D366, E370, 397–404 (FSAKTRMS), and K416. The Mg(2+) site is built by D539 and D543. 3 helical membrane passes run 599-619 (FSLA…FASA), 635-655 (AVLS…PLAL), and 681-701 (VIAP…VGLA).

The protein belongs to the cation transport ATPase (P-type) (TC 3.A.3) family. Type IA subfamily. The system is composed of three essential subunits: KdpA, KdpB and KdpC.

The protein localises to the cell membrane. It catalyses the reaction K(+)(out) + ATP + H2O = K(+)(in) + ADP + phosphate + H(+). In terms of biological role, part of the high-affinity ATP-driven potassium transport (or Kdp) system, which catalyzes the hydrolysis of ATP coupled with the electrogenic transport of potassium into the cytoplasm. This subunit is responsible for energy coupling to the transport system and for the release of the potassium ions to the cytoplasm. This chain is Potassium-transporting ATPase ATP-binding subunit, found in Anabaena sp. (strain L31).